Consider the following 500-residue polypeptide: Maturase K (500 aa).

It belongs to the intron maturase 2 family. MatK subfamily.

It is found in the plastid. Its subcellular location is the chloroplast. Usually encoded in the trnK tRNA gene intron. Probably assists in splicing its own and other chloroplast group II introns. The sequence is that of Maturase K from Fragaria vesca (Woodland strawberry).